The sequence spans 2182 residues: MATFFQSFRSSSMPKRLLRYALSRLELLDADALEMDNLDLAIGRNTVFEFRDVGIKLKKLNKLLQLPDTFKLKKAKVLLLRVTIPMDFYTSPIIVEVDGVDIALQVIGNESKPSRSPGTRTPDESVAVPNTVDLAQSFLETQPKSERRKLEDALAAESQDLGASVSMSDDGSEDDLAYGTGQALSLPAFLADFLQGIVDRMQVRIKGVNFQLDVEVLVEPSSTTNEMVSFQVALEGIDVEGVTTRSYDDAGFPTIVHKEGKRHVSLSNVRAYLISEANVFSALAKSPSIASPSLASSPAMTRNPPSRQATELSLASLRDEPVSSSQASIRSNEPESASHHSLPENDHILSSQHSIDQRLESSLRQSLQRKDPLADSHESLQDDYFMDQEPVEQDYPLGDSEDALGIPYEFSNPQDDDAEDSPATPRASMYHDFNNAANDETLFHSILLPGEHGSQSTVLENERSMWSTPEREARSAPNLETPVAQFNMEASSSSIQNEQLRRTFSSESFGVASTEELAQSHMYTHEDAENEPAPEVEQTTEPEKPDSPVLDTSVHELARPQTPEPELSIAEAPVPETSSPKALSLRAPSPVTEDAPSPVREHRKPEGFIPGAWDDDYDDPEEEPVASTTLRRSAYRSKILSDPADASDSESSEPAFSRACLTDIDPENPRASTKQQEDVATPKGPTRLVKEILNLKTISIYIPSQHQHIQVQPASSESVAELSQSLGQSAYPQAPGAFSVHGATHAQQRSSQGTSSVENSLEVDLSPINLRFDASLGFLLAMVVGKLLEAVKDKKPSPAEGSKQDTASKDAPSKETPNVKVTFEEIKLDFVNRLGGISDTPERYLDPSAFIFDQEVLLNATLQNLAISITQTEISTTPVTKGRLTTQPAVLTRIDLQKFRFGYANGDIISFDSGKPMSTSVRDTFLSDGTDIGIKILQSGGNTKTEVQTLPLVFQLDLRRLDETFSWFGGLSSFLNMSASIASSPAPTPKPAAVVQKPRGVRFDTPVDPDDKSAASENKINLRIGGSWVELIGKDCSMIAETSAIKLISRDEVIGMACSMMRVSGPHLKNSAAEPPINTEIGGVRVEFLTTPKDTDLEKLLELIMPSKHQFDGENDEIMVDTLLRQRRKGSVLRVTVDTVSVRVQNMPLLSVLPNLGEEVAKLSTVAKYLPEDDRPGLLTLGKIRKVGLSLDFGGKLGHLGTDIQDLHVGHISIPSLVAIALHDISVQRNRSEELVSTSPYGARDISLRSPVLMARMIGDEIEPVIKLKMQDLCIEYRVPTIMDLLELGEDATPQDFEASLAASVANLGDQAHHVLTGAPGSPGGKAKSGKPMTLDIGFRDCLLGLNPLGQPSKMVIALTDAHLVALLPQDVETNAVFTINKSSILLINDVAEVKMNELPATQRSRASSSTSRQVSDMCARGYVDICYISSAKVTVDVKELEDGEKQLVVELKDDLLVLETCADSMQTLVSLANALKPPTPPSKENKYLTDVVPMQDLLASISAEAFGRPEGEYDFDQDFAGAQEMAGSGSEADYNTDSPLQVQSRYYDEPVAEELFDATSSSIISRGSQRSGPMMQDTNEGVLLTGFEPTSQQSIDSDDLVIHDDYYDQGASKDSKAKVWNSMKNSYDLAPSDLVKRSILRVKVRDVHVIWNLFDGYDWVHTRDVITKAVQDVEAKAYERQARAGQVHVYEEELEDEEAIGDFLFNSIYIGIPANRDPQELSRAINEGFNDGATETESVATTAFTSATNRTARARPRSKRLKLKRSKHHKITFELQGVDADLFVFPPNSGETLNSIDVRIKTLDVFDHVPTSTWKKFATYDQDMGEREMGTSMVHLEMLNVKPQPSLEASEIVLRATILPLRLHVDQDALDFITRFFEFKDDQVPVHTSKSDVPFLQRAEINNISVKLDFKPKRVDYAGLRSGHTTEFMNFIVLEEARMVLRHVIIYGISGFEKLGKTLNDIWTPDVKANQLPGILAGLAPVRSLVNVGSGFRDLVEVPIREYKKDGRVIRSISKGATAFARTTGTELVKLGAKLAVGTQYALQGAEGMLSGPQQVYEGWDDDDVDPDEQRQISLYADQPTGVISGIRGGYRSLARDVNLVRDAIIAVPGEVMESSTASGAARAVLKRAPTIIFRPAVGVTRAIGQTLMGATNSIDPNNRRRIEEVCYLFAILRRILLTAA.

Disordered stretches follow at residues 291–375, 392–426, 523–630, 663–682, 736–758, and 793–816; these read SPSL…PLAD, EQDY…ATPR, YTHE…STTL, DIDP…VATP, GAFS…SSVE, and DKKP…SKET. Composition is skewed to polar residues over residues 303–313 and 322–331; these read NPPSRQATELS and VSSSQASIRS. The segment covering 332 to 347 has biased composition (basic and acidic residues); the sequence is NEPESASHHSLPENDH. Composition is skewed to acidic residues over residues 528 to 540 and 613 to 624; these read AENE…EQTT and WDDDYDDPEEEP. Positions 745-758 are enriched in polar residues; it reads HAQQRSSQGTSSVE. A compositionally biased stretch (basic and acidic residues) spans 793-813; that stretch reads DKKPSPAEGSKQDTASKDAPS.

Belongs to the ATG2 family. As to quaternary structure, interacts with ATG18.

It localises to the preautophagosomal structure membrane. The protein resides in the endoplasmic reticulum membrane. The catalysed reaction is a 1,2-diacyl-sn-glycero-3-phosphocholine(in) = a 1,2-diacyl-sn-glycero-3-phosphocholine(out). The enzyme catalyses a 1,2-diacyl-sn-glycero-3-phospho-L-serine(in) = a 1,2-diacyl-sn-glycero-3-phospho-L-serine(out). It catalyses the reaction a 1,2-diacyl-sn-glycero-3-phosphoethanolamine(in) = a 1,2-diacyl-sn-glycero-3-phosphoethanolamine(out). Its function is as follows. Lipid transfer protein required for autophagosome completion and peroxisome degradation and peroxisome degradation. Tethers the edge of the isolation membrane (IM) to the endoplasmic reticulum (ER) and mediates direct lipid transfer from ER to IM for IM expansion. ATG2 binds to the ER exit site (ERES), which is the membrane source for autophagosome formation, using basic residues in its N-terminal region (NR) and to the expanding edge of the IM through its C-terminal region. The latter binding is assisted by an ATG18-PtdIns3P interaction. ATG2 then extracts phospholipids from the membrane source using its NR and transfers them to ATG9 to the IM through its predicted beta-sheet-rich structure for membrane expansion. Autophagy is required for proper vegetative growth, asexual/sexual reproduction, and full virulence. Autophagy is particularly involved in the biosynthesis of deoxynivalenol (DON), an important virulence determinant. In Gibberella zeae (strain ATCC MYA-4620 / CBS 123657 / FGSC 9075 / NRRL 31084 / PH-1) (Wheat head blight fungus), this protein is Autophagy-related protein 2.